The chain runs to 298 residues: Protoheme IX farnesyltransferase (298 aa).

Helical transmembrane passes span 16 to 36, 45 to 65, 93 to 113, 114 to 134, 141 to 161, 172 to 192, 218 to 238, 241 to 261, and 277 to 297; these read VVAL…PDMP, ALGF…NQLL, VFAG…VNVI, TAVL…VYLK, IVIG…AVTG, SLLV…LAIF, ILVY…VGMS, FYLG…WRML, and IVYL…LPWV.

Belongs to the UbiA prenyltransferase family. Protoheme IX farnesyltransferase subfamily.

It localises to the cell inner membrane. It carries out the reaction heme b + (2E,6E)-farnesyl diphosphate + H2O = Fe(II)-heme o + diphosphate. It functions in the pathway porphyrin-containing compound metabolism; heme O biosynthesis; heme O from protoheme: step 1/1. Functionally, converts heme B (protoheme IX) to heme O by substitution of the vinyl group on carbon 2 of heme B porphyrin ring with a hydroxyethyl farnesyl side group. The protein is Protoheme IX farnesyltransferase of Xanthomonas axonopodis pv. citri (strain 306).